A 322-amino-acid polypeptide reads, in one-letter code: Lymphatic vessel endothelial hyaluronic acid receptor 1 (322 aa).

An N-terminal signal peptide occupies residues 1-19 (MARCFSLVLLLTSIWTTRL). At 20–238 (LVQGSLRAEE…EAAGFGGVPT (219 aa)) the chain is on the extracellular side. One can recognise a Link domain in the interval 40–130 (GITLVSKKAN…SRQFAAYCYN (91 aa)). N-linked (GlcNAc...) asparagine glycosylation is present at Asn53. 2 disulfide bridges follow: Cys61-Cys128 and Cys85-Cys106. An N-linked (GlcNAc...) asparagine glycan is attached at Asn130. Residues 239-259 (ALLVLALLFFGAAAGLGFCYV) form a helical membrane-spanning segment. Residues 260 to 322 (KRYVKAFPFT…TTVRCLEAEV (63 aa)) are Cytoplasmic-facing. Over residues 279 to 309 (ETKVVKEEKANDSNPNEESKKTDKNPEESKS) the composition is skewed to basic and acidic residues. Positions 279–322 (ETKVVKEEKANDSNPNEESKKTDKNPEESKSPSKTTVRCLEAEV) are disordered.

As to quaternary structure, homodimer; disulfide-linked. Interacts with PDGFB and IGFBP3. Forms a transient ternary complex with PDGFB and PDGFRB in TGN. O-glycosylated. In terms of tissue distribution, mainly expressed in endothelial cells lining lymphatic vessels.

The protein localises to the cell membrane. Its function is as follows. Ligand-specific transporter trafficking between intracellular organelles (TGN) and the plasma membrane. Plays a role in autocrine regulation of cell growth mediated by growth regulators containing cell surface retention sequence binding (CRS). May act as a hyaluronan (HA) transporter, either mediating its uptake for catabolism within lymphatic endothelial cells themselves, or its transport into the lumen of afferent lymphatic vessels for subsequent re-uptake and degradation in lymph nodes. Binds to pericelluar hyaluronan matrices deposited on the surface of leukocytes and facilitates cell adhesion and migration through lymphatic endothelium. The polypeptide is Lymphatic vessel endothelial hyaluronic acid receptor 1 (LYVE1) (Homo sapiens (Human)).